We begin with the raw amino-acid sequence, 156 residues long: Small ribosomal subunit protein uS7 (156 aa).

Belongs to the universal ribosomal protein uS7 family. Part of the 30S ribosomal subunit. Contacts proteins S9 and S11.

Its function is as follows. One of the primary rRNA binding proteins, it binds directly to 16S rRNA where it nucleates assembly of the head domain of the 30S subunit. Is located at the subunit interface close to the decoding center, probably blocks exit of the E-site tRNA. The polypeptide is Small ribosomal subunit protein uS7 (Geotalea uraniireducens (strain Rf4) (Geobacter uraniireducens)).